Here is a 121-residue protein sequence, read N- to C-terminus: Fluoride-specific ion channel FluC 3 (121 aa).

Transmembrane regions (helical) follow at residues 3–23 (VFLPILVCLCGGVGASCRYLL), 40–60 (FTINLIAGFLAGLVAALALGG), 69–89 (VLATGFLGGFSTFSTAINEMV), and 101–121 (AAYLVLSLGVPVVAAACGFLV). The Na(+) site is built by glycine 76 and serine 79.

This sequence belongs to the fluoride channel Fluc/FEX (TC 1.A.43) family.

The protein resides in the cell membrane. It carries out the reaction fluoride(in) = fluoride(out). Na(+) is not transported, but it plays an essential structural role and its presence is essential for fluoride channel function. Its function is as follows. Fluoride-specific ion channel. Important for reducing fluoride concentration in the cell, thus reducing its toxicity. The polypeptide is Fluoride-specific ion channel FluC 3 (Bifidobacterium longum (strain NCC 2705)).